A 301-amino-acid polypeptide reads, in one-letter code: Ornithine carbamoyltransferase (301 aa).

Residues Arg-100 and His-127 to Gln-130 contribute to the carbamoyl phosphate site. L-ornithine is bound by residues Asn-158, Asp-221, and Ser-225–Met-226. Carbamoyl phosphate is bound by residues Cys-260 and Arg-288.

It belongs to the aspartate/ornithine carbamoyltransferase superfamily. OTCase family. As to quaternary structure, the enzyme is present as a mixture of trimers and dodecamers, with the relative proportions of the two forms depending on the salt concentration. In addition, the trimeric fraction could reassociate into dodecamers when the salt concentration is increased. It appears that in vivo, the main fraction is in the dodecameric form.

The protein localises to the cytoplasm. It carries out the reaction carbamoyl phosphate + L-ornithine = L-citrulline + phosphate + H(+). Its pathway is amino-acid biosynthesis; L-arginine biosynthesis; L-arginine from L-ornithine and carbamoyl phosphate: step 1/3. With respect to regulation, inhibited by excess of arginine and by the bisubstrate delta-N-phosphonoacetyl-L-ornithine (PALO). Functionally, reversibly catalyzes the transfer of the carbamoyl group from carbamoyl phosphate (CP) to the N(epsilon) atom of ornithine (ORN) to produce L-citrulline, which is a substrate for argininosuccinate synthetase, the enzyme involved in the final step in arginine biosynthesis. This is Ornithine carbamoyltransferase from Moritella abyssi.